The sequence spans 291 residues: Ubiquinone biosynthesis protein COQ4, mitochondrial (291 aa).

The N-terminal 37 residues, 1–37, are a transit peptide targeting the mitochondrion; it reads MLGRRSVSLLRGLTELPVSSRAHTALRALSVPQTRRN. Residues H169, D170, H173, and E185 each contribute to the Zn(2+) site. The segment covering 271 to 283 has biased composition (basic and acidic residues); it reads PLNEAKEAAERRS. Positions 271–291 are disordered; the sequence is PLNEAKEAAERRSKTTQNQIY.

Belongs to the COQ4 family. In terms of assembly, component of a multi-subunit COQ enzyme complex, composed of at least COQ3, COQ4, COQ5, COQ6, COQ7 and COQ9. Zn(2+) is required as a cofactor.

The protein resides in the mitochondrion inner membrane. The catalysed reaction is a 4-hydroxy-3-methoxy-5-(all-trans-polyprenyl)benzoate + H(+) = a 2-methoxy-6-(all-trans-polyprenyl)phenol + CO2. Its pathway is cofactor biosynthesis; ubiquinone biosynthesis. Lyase that catalyzes the C1-decarboxylation of 4-hydroxy-3-methoxy-5-(all-trans-polyprenyl)benzoic acid into 2-methoxy-6-(all-trans-polyprenyl)phenol during ubiquinone biosynthesis. The sequence is that of Ubiquinone biosynthesis protein COQ4, mitochondrial from Coprinopsis cinerea (strain Okayama-7 / 130 / ATCC MYA-4618 / FGSC 9003) (Inky cap fungus).